A 187-amino-acid chain; its full sequence is UPF0340 protein SPD_0576 (187 aa).

It belongs to the UPF0340 family.

The sequence is that of UPF0340 protein SPD_0576 from Streptococcus pneumoniae serotype 2 (strain D39 / NCTC 7466).